The following is a 108-amino-acid chain: Phosphoribosyl-ATP pyrophosphatase (108 aa).

It belongs to the PRA-PH family.

The protein localises to the cytoplasm. It carries out the reaction 1-(5-phospho-beta-D-ribosyl)-ATP + H2O = 1-(5-phospho-beta-D-ribosyl)-5'-AMP + diphosphate + H(+). The protein operates within amino-acid biosynthesis; L-histidine biosynthesis; L-histidine from 5-phospho-alpha-D-ribose 1-diphosphate: step 2/9. This is Phosphoribosyl-ATP pyrophosphatase from Geobacter sulfurreducens (strain ATCC 51573 / DSM 12127 / PCA).